Reading from the N-terminus, the 21-residue chain is Nigrocin-2HSa (21 aa).

Residues Cys15 and Cys21 are joined by a disulfide bond.

As to expression, expressed by the skin glands.

It is found in the secreted. In terms of biological role, has antibacterial activity against the Gram-positive bacterium S.aureus ATCC 25923 (MIC=56 uM) and the Gram-negative bacterium E.coli ATCC 25726 (MIC=28 uM). This is Nigrocin-2HSa from Odorrana hosii (Hose's rock frog).